A 290-amino-acid polypeptide reads, in one-letter code: MKPERNSLSEKIRNAEKIVIKVGSARLSGLPSEVNDFLFQLVSDIRHLRDLGKKVILVSSGAIARGRLLLSELPSTISSGDSLAEKQALAAMGQNRLVNLYDSFFSKVNLSIAQILFGVLDLESKEGYKNLKNTFTQLVEWGILPVVNENDSVATEEVKFGDNDMLSALVSLIVEADLLIILTGVDGFLKEEKVVPFLEKISKEDLGLAGGPSGPGTGGMFTKLKSAGLLSEAGIPTAILNGKKMHVIREFLEKNSIGTLVAPSGNRVFSEEDVKEIIRKNRNGNGGNSL.

K21 contacts ATP. Substrate-binding residues include S60, D151, and N163. T217–K223 contacts ATP.

This sequence belongs to the glutamate 5-kinase family.

It localises to the cytoplasm. It carries out the reaction L-glutamate + ATP = L-glutamyl 5-phosphate + ADP. The protein operates within amino-acid biosynthesis; L-proline biosynthesis; L-glutamate 5-semialdehyde from L-glutamate: step 1/2. Functionally, catalyzes the transfer of a phosphate group to glutamate to form L-glutamate 5-phosphate. The protein is Glutamate 5-kinase of Leptospira interrogans serogroup Icterohaemorrhagiae serovar copenhageni (strain Fiocruz L1-130).